The chain runs to 146 residues: Hemoglobin subunit beta (146 aa).

N-acetylvaline is present on Val1. The 145-residue stretch at 2-146 folds into the Globin domain; the sequence is HLTPEEKTAV…VANALAHKYH (145 aa). Thr12 carries the post-translational modification Phosphothreonine. Residue Ser44 is modified to Phosphoserine. Lys59 bears the N6-acetyllysine mark. His63 contacts heme b. Residue Lys82 is modified to N6-acetyllysine. Position 92 (His92) interacts with heme b. Position 93 is an S-nitrosocysteine (Cys93). An N6-acetyllysine modification is found at Lys144.

The protein belongs to the globin family. In terms of assembly, heterotetramer of two alpha chains and two beta chains. Red blood cells.

Its function is as follows. Involved in oxygen transport from the lung to the various peripheral tissues. This is Hemoglobin subunit beta (HBB) from Chlorocebus aethiops (Green monkey).